The sequence spans 377 residues: MHVLVLGAGQLARMMSLAGAPLNIQISAYDVTTGDVVHPLTLHLLGHGLEQAIEHVDVITAEFEHIPHDILAICQASGKFLPSSEAIKAGGDRRLEKTLLDHAGVRNANYYVIETREDFNKAIEHVGIPMVLKSALGGYDGRGQWRLKDAAQIETLWQEMAACIAATPTQAIVAEEFVPFQREVSLIGARGKEGQIEVYPLAENIHVNGVLSLSTAIDSPDLQEQAKHMFTAVAETLNYVGVLALEFFDVDGQLLVNEIAPRVHNSGHWTQQGAETCQFENHLRAVCGLPLGSTKLVRETSMINILGEDTLPASVMAMDGCHIHWYGKEKRAGRKMGHINVCGDYSGELQRRLCALANVLDEKAFPAVHEFAKKWQA.

Residues R93, K133, 138–144 (GYDGRGQ), 175–178 (EEFV), E183, H206, and 257–258 (NE) each bind ATP. The 191-residue stretch at 97–287 (KTLLDHAGVR…QFENHLRAVC (191 aa)) folds into the ATP-grasp domain.

Belongs to the PurK/PurT family. Homodimer.

It carries out the reaction 5-amino-1-(5-phospho-beta-D-ribosyl)imidazole + hydrogencarbonate + ATP = 5-carboxyamino-1-(5-phospho-D-ribosyl)imidazole + ADP + phosphate + 2 H(+). It functions in the pathway purine metabolism; IMP biosynthesis via de novo pathway; 5-amino-1-(5-phospho-D-ribosyl)imidazole-4-carboxylate from 5-amino-1-(5-phospho-D-ribosyl)imidazole (N5-CAIR route): step 1/2. Functionally, catalyzes the ATP-dependent conversion of 5-aminoimidazole ribonucleotide (AIR) and HCO(3)(-) to N5-carboxyaminoimidazole ribonucleotide (N5-CAIR). This Vibrio vulnificus (strain YJ016) protein is N5-carboxyaminoimidazole ribonucleotide synthase.